A 660-amino-acid polypeptide reads, in one-letter code: Acetyl-coenzyme A synthetase (660 aa).

CoA-binding positions include 197–200 (RGGK) and Thr317. Residues 397–399 (GEP), 421–426 (DTFWQT), Asp512, and Arg528 each bind ATP. Residue Ser536 participates in CoA binding. Residue Arg539 coordinates ATP. The Mg(2+) site is built by Val550 and Val555. Lys625 is modified (N6-acetyllysine).

Belongs to the ATP-dependent AMP-binding enzyme family. Requires Mg(2+) as cofactor. Acetylated. Deacetylation by the SIR2-homolog deacetylase activates the enzyme.

It carries out the reaction acetate + ATP + CoA = acetyl-CoA + AMP + diphosphate. Functionally, catalyzes the conversion of acetate into acetyl-CoA (AcCoA), an essential intermediate at the junction of anabolic and catabolic pathways. AcsA undergoes a two-step reaction. In the first half reaction, AcsA combines acetate with ATP to form acetyl-adenylate (AcAMP) intermediate. In the second half reaction, it can then transfer the acetyl group from AcAMP to the sulfhydryl group of CoA, forming the product AcCoA. The protein is Acetyl-coenzyme A synthetase of Cupriavidus metallidurans (strain ATCC 43123 / DSM 2839 / NBRC 102507 / CH34) (Ralstonia metallidurans).